A 51-amino-acid polypeptide reads, in one-letter code: MSKNKPLGRKLRLARALKSNSPVPAWVIIKTNGKFRYNFHRRDWRRNDLKV.

It belongs to the eukaryotic ribosomal protein eL39 family.

The chain is Large ribosomal subunit protein eL39 from Sulfurisphaera tokodaii (strain DSM 16993 / JCM 10545 / NBRC 100140 / 7) (Sulfolobus tokodaii).